We begin with the raw amino-acid sequence, 83 residues long: Short neurotoxin B (83 aa).

A signal peptide spans 1–21; sequence MKTLLLTLVVVTIVCLDLGYT. 4 disulfide bridges follow: cysteine 24–cysteine 45, cysteine 38–cysteine 62, cysteine 64–cysteine 75, and cysteine 76–cysteine 81.

This sequence belongs to the three-finger toxin family. Short-chain subfamily. Type I alpha-neurotoxin sub-subfamily. Expressed by the venom gland.

It localises to the secreted. Its function is as follows. Binds to muscle nicotinic acetylcholine receptor (nAChR) and inhibit acetylcholine from binding to the receptor, thereby impairing neuromuscular transmission. The protein is Short neurotoxin B of Laticauda laticaudata (Blue-ringed sea krait).